The sequence spans 239 residues: Fatty acid metabolism regulator protein (239 aa).

The HTH gntR-type domain occupies 6–74 (KGPASFAEKY…HGKPTRVNNF (69 aa)). The H-T-H motif DNA-binding region spans 34–53 (ERELSELIGVTRTTLREVLQ).

In terms of assembly, homodimer.

The protein localises to the cytoplasm. Multifunctional regulator of fatty acid metabolism. The sequence is that of Fatty acid metabolism regulator protein from Shewanella pealeana (strain ATCC 700345 / ANG-SQ1).